A 179-amino-acid chain; its full sequence is Adenine phosphoribosyltransferase (179 aa).

It belongs to the purine/pyrimidine phosphoribosyltransferase family. As to quaternary structure, homodimer.

The protein localises to the cytoplasm. It carries out the reaction AMP + diphosphate = 5-phospho-alpha-D-ribose 1-diphosphate + adenine. Its pathway is purine metabolism; AMP biosynthesis via salvage pathway; AMP from adenine: step 1/1. Functionally, catalyzes a salvage reaction resulting in the formation of AMP, that is energically less costly than de novo synthesis. The protein is Adenine phosphoribosyltransferase of Helicobacter pylori (strain HPAG1).